Reading from the N-terminus, the 57-residue chain is Large ribosomal subunit protein bL32 (57 aa).

Basic residues predominate over residues 1 to 19; it reads MATPKRRMSRANTRSRRSQ. Residues 1–20 form a disordered region; it reads MATPKRRMSRANTRSRRSQW.

Belongs to the bacterial ribosomal protein bL32 family.

The polypeptide is Large ribosomal subunit protein bL32 (Mycobacterium marinum (strain ATCC BAA-535 / M)).